We begin with the raw amino-acid sequence, 267 residues long: Pyridoxine/pyridoxamine 5'-phosphate oxidase (267 aa).

Substrate contacts are provided by residues 20-23 (RQGY) and K80. FMN is bound by residues 75–80 (RTVLLK), 90–91 (YT), R96, K97, and Q119. Residues Y137, R141, and S145 each contribute to the substrate site. FMN contacts are provided by residues 154 to 155 (QS) and W200. Residue 206–208 (RLH) coordinates substrate. An FMN-binding site is contributed by R210.

This sequence belongs to the pyridoxamine 5'-phosphate oxidase family. As to quaternary structure, homodimer. Requires FMN as cofactor.

The enzyme catalyses pyridoxamine 5'-phosphate + O2 + H2O = pyridoxal 5'-phosphate + H2O2 + NH4(+). The catalysed reaction is pyridoxine 5'-phosphate + O2 = pyridoxal 5'-phosphate + H2O2. It functions in the pathway cofactor metabolism; pyridoxal 5'-phosphate salvage; pyridoxal 5'-phosphate from pyridoxamine 5'-phosphate: step 1/1. The protein operates within cofactor metabolism; pyridoxal 5'-phosphate salvage; pyridoxal 5'-phosphate from pyridoxine 5'-phosphate: step 1/1. Its function is as follows. Catalyzes the oxidation of either pyridoxine 5'-phosphate (PNP) or pyridoxamine 5'-phosphate (PMP) into pyridoxal 5'-phosphate (PLP). The polypeptide is Pyridoxine/pyridoxamine 5'-phosphate oxidase (Frankia casuarinae (strain DSM 45818 / CECT 9043 / HFP020203 / CcI3)).